Here is a 302-residue protein sequence, read N- to C-terminus: Diacetylchitobiose uptake system permease protein NgcG (302 aa).

6 helical membrane-spanning segments follow: residues 40 to 60 (LLILWSVIVIVPMLWVLMSSF), 99 to 119 (VIVVVSALILVMLLGAMCAYV), 131 to 151 (IYYVMLAGLTFPVFLAIVPLF), 166 to 186 (LILTYVAFALPFTMFFLYSFF), 221 to 241 (AAVAIFNFLGLWNQFLLPVAL), and 268 to 288 (GALFAAIVVTVVPVLLVYCVF). The 194-residue stretch at 95 to 288 (FLNSVIVVVS…VPVLLVYCVF (194 aa)) folds into the ABC transmembrane type-1 domain.

The protein belongs to the binding-protein-dependent transport system permease family. The complex is composed of two ATP-binding proteins (MsiK), two transmembrane proteins (NgcF and NgcG) and a solute-binding protein (NgcE).

It is found in the cell membrane. Functionally, part of the ABC transporter complex NgcEFG-MsiK involved in N,N'-diacetylchitobiose ((GlcNAc)2) uptake. Responsible for the translocation of the substrate across the membrane. The sequence is that of Diacetylchitobiose uptake system permease protein NgcG from Streptomyces coelicolor (strain ATCC BAA-471 / A3(2) / M145).